Reading from the N-terminus, the 556-residue chain is MSVSAFNRRWAAVILEALTRHGVRHICIAPGSRSTPLTLAAAENSAFIHHTHFDERGLGHLALGLAKVSKQPVAMIVTSGTAVANLYPALIEAGLTGEKLILLTADRPPELIDCGANQAIRQPGMFASHPTHSISLPRPTQDIPARWLVSTIDHALGTLHAGGVHINCPFAEPLYGEMDDTGLSWQQRLGDWWQDDKPWLREAPRLESEKQRDWFFWRQKRGVVVAGRMSAEEGKKVALWAQTLGWPLIGDVLSQTGQPLPCADLWLGNAKATSELQQAQIVVQLGSSLTGKRLLQWQASCEPEEYWIVDDIEGRLDPAHHRGRRLIANIADWLELHPAEKRQPWCVEIPRLAEQAMQAVIARRDAFGEAQLAHRICDYLPEQGQLFVGNSLVVRLIDALSQLPAGYPVYSNRGASGIDGLLSTAAGVQRASGKPTLAIVGDLSALYDLNALALLRQVSAPLVLIVVNNNGGQIFSLLPTPQSERERFYLMPQNVHFEHAAAMFELKYHRPQNWQELETAFADAWRTPTTTVIEMVVNDTDGAQTLQQLLAQVSHL.

It belongs to the TPP enzyme family. MenD subfamily. In terms of assembly, homodimer. The cofactor is Mg(2+). It depends on Mn(2+) as a cofactor. Thiamine diphosphate serves as cofactor.

It catalyses the reaction isochorismate + 2-oxoglutarate + H(+) = 5-enolpyruvoyl-6-hydroxy-2-succinyl-cyclohex-3-ene-1-carboxylate + CO2. It participates in quinol/quinone metabolism; 1,4-dihydroxy-2-naphthoate biosynthesis; 1,4-dihydroxy-2-naphthoate from chorismate: step 2/7. The protein operates within quinol/quinone metabolism; menaquinone biosynthesis. Functionally, catalyzes the thiamine diphosphate-dependent decarboxylation of 2-oxoglutarate and the subsequent addition of the resulting succinic semialdehyde-thiamine pyrophosphate anion to isochorismate to yield 2-succinyl-5-enolpyruvyl-6-hydroxy-3-cyclohexene-1-carboxylate (SEPHCHC). The polypeptide is 2-succinyl-5-enolpyruvyl-6-hydroxy-3-cyclohexene-1-carboxylate synthase (Escherichia coli (strain ATCC 8739 / DSM 1576 / NBRC 3972 / NCIMB 8545 / WDCM 00012 / Crooks)).